The chain runs to 422 residues: CinA-like protein (422 aa).

The protein belongs to the CinA family.

The sequence is that of CinA-like protein from Mycolicibacterium vanbaalenii (strain DSM 7251 / JCM 13017 / BCRC 16820 / KCTC 9966 / NRRL B-24157 / PYR-1) (Mycobacterium vanbaalenii).